The primary structure comprises 233 residues: MKRKQDSKGAGSRGQGAGEKKQGAGGRGQGEKKQKKSPVPSPQSPVPDPDEWLQIGKIVSAQGLSGEVRVYPDSDFPERFEVPGTRWLLRPGQTEPQPIELLHGRYLENKNLYVLQLAGVENRTQSEELRGCMLFVPASDRPELGEDEYHVVDLIGMEVFLQTSGDLVGTVVDVIPAGNDLLEVSLHEPVPSDKKPKTVLIPFVKAIAPVVDLETRRIEITPPPGLLELGSGV.

The interval 1–51 is disordered; the sequence is MKRKQDSKGAGSRGQGAGEKKQGAGGRGQGEKKQKKSPVPSPQSPVPDPDE. Gly residues predominate over residues 11-28; that stretch reads GSRGQGAGEKKQGAGGRG. Residues 145 to 226 enclose the PRC barrel domain; sequence GEDEYHVVDL…RIEITPPPGL (82 aa).

This sequence belongs to the RimM family. As to quaternary structure, binds ribosomal protein uS19.

It localises to the cytoplasm. Its function is as follows. An accessory protein needed during the final step in the assembly of 30S ribosomal subunit, possibly for assembly of the head region. Essential for efficient processing of 16S rRNA. May be needed both before and after RbfA during the maturation of 16S rRNA. It has affinity for free ribosomal 30S subunits but not for 70S ribosomes. This Trichormus variabilis (strain ATCC 29413 / PCC 7937) (Anabaena variabilis) protein is Ribosome maturation factor RimM.